The primary structure comprises 521 residues: GMP synthase [glutamine-hydrolyzing] (521 aa).

One can recognise a Glutamine amidotransferase type-1 domain in the interval 8 to 203; it reads KILILDFGAQ…VVDVCGCQTL (196 aa). Cys85 (nucleophile) is an active-site residue. Active-site residues include His177 and Glu179. In terms of domain architecture, GMPS ATP-PPase spans 204-396; the sequence is WTAANIIDDQ…LGLPRTMVYR (193 aa). 231–237 provides a ligand contact to ATP; that stretch reads SGGVDSS.

Homodimer.

It carries out the reaction XMP + L-glutamine + ATP + H2O = GMP + L-glutamate + AMP + diphosphate + 2 H(+). It participates in purine metabolism; GMP biosynthesis; GMP from XMP (L-Gln route): step 1/1. In terms of biological role, catalyzes the synthesis of GMP from XMP. This chain is GMP synthase [glutamine-hydrolyzing], found in Xanthomonas campestris pv. campestris (strain B100).